The chain runs to 307 residues: Elongation factor Ts (307 aa).

The interval 80–83 (TDFV) is involved in Mg(2+) ion dislocation from EF-Tu.

It belongs to the EF-Ts family.

Its subcellular location is the cytoplasm. In terms of biological role, associates with the EF-Tu.GDP complex and induces the exchange of GDP to GTP. It remains bound to the aminoacyl-tRNA.EF-Tu.GTP complex up to the GTP hydrolysis stage on the ribosome. The protein is Elongation factor Ts of Clostridium botulinum (strain Loch Maree / Type A3).